We begin with the raw amino-acid sequence, 906 residues long: Protein translocase subunit SecA (906 aa).

ATP-binding positions include Gln-87, 105–109, and Asp-507; that span reads GEGKT. Positions 890, 892, 901, and 902 each coordinate Zn(2+).

Belongs to the SecA family. In terms of assembly, monomer and homodimer. Part of the essential Sec protein translocation apparatus which comprises SecA, SecYEG and auxiliary proteins SecDF-YajC and YidC. Requires Zn(2+) as cofactor.

Its subcellular location is the cell inner membrane. The protein resides in the cytoplasm. It catalyses the reaction ATP + H2O + cellular proteinSide 1 = ADP + phosphate + cellular proteinSide 2.. In terms of biological role, part of the Sec protein translocase complex. Interacts with the SecYEG preprotein conducting channel. Has a central role in coupling the hydrolysis of ATP to the transfer of proteins into and across the cell membrane, serving both as a receptor for the preprotein-SecB complex and as an ATP-driven molecular motor driving the stepwise translocation of polypeptide chains across the membrane. The chain is Protein translocase subunit SecA from Laribacter hongkongensis (strain HLHK9).